Consider the following 1429-residue polypeptide: Nitric oxide synthase 1 (1429 aa).

An interaction with NOSIP region spans residues 1-200; the sequence is MEENTFGVQQ…LQDIGEHDEL (200 aa). The PDZ domain maps to 17–99; it reads SVRLFKRKVG…ETHVVLILRG (83 aa). Disordered stretches follow at residues 152–174, 214–255, and 271–298; these read VTGLGNGPQHAQGHGQGAGSVSQ, GSKA…DNDR, and NNPYSEKEQSPTSGKQSPTKNGSPSRCP. The span at 160–174 shows a compositional bias: low complexity; that stretch reads QHAQGHGQGAGSVSQ. Residues 163–240 are interaction with DYNLL1/PIN; sequence QGHGQGAGSV…TGIQVDRDLD (78 aa). Positions 226-243 are enriched in basic and acidic residues; sequence AEMKDTGIQVDRDLDGKS. A Phosphoserine modification is found at Ser-280. The segment covering 280-294 has biased composition (polar residues); it reads SPTSGKQSPTKNGSP. A (6R)-L-erythro-5,6,7,8-tetrahydrobiopterin-binding site is contributed by Ser-334. Residue Cys-415 coordinates heme b. Positions 478, 587, 588, and 592 each coordinate L-arginine. 3 residues coordinate (6R)-L-erythro-5,6,7,8-tetrahydrobiopterin: Val-677, Trp-678, and Phe-691. A heme b-binding site is contributed by Tyr-706. Residues 725-745 form a calmodulin-binding region; that stretch reads KRRAIGFKKLAEAVKFSAKLM. The Flavodoxin-like domain occupies 755–935; that stretch reads ATILYATETG…AFRTWAKKVF (181 aa). FMN contacts are provided by Thr-761, Glu-762, Thr-763, Lys-765, Ser-766, Ser-807, Thr-808, and Gly-812. A phosphoserine mark is found at Ser-847, Ser-857, and Ser-858. Residues Ser-886, His-891, Cys-893, Glu-919, and Gln-923 each coordinate FMN. An FAD-binding FR-type domain is found at 990 to 1237; it reads KRVSAARLLS…VRGAPSFHLP (248 aa). Arg-1010 lines the NADP(+) pocket. FAD contacts are provided by His-1032, Arg-1173, Tyr-1174, Tyr-1175, Ser-1176, Thr-1191, and Ala-1193. Ser-1196 provides a ligand contact to NADP(+). Residues Tyr-1197, Val-1210, Cys-1211, and Ser-1212 each contribute to the FAD site. NADP(+)-binding residues include Thr-1251, Arg-1284, Ser-1313, Arg-1314, Lys-1320, Tyr-1322, Gln-1324, Asp-1357, Thr-1398, and Arg-1400.

The protein belongs to the NOS family. Homodimer. Interacts with DLG4 (via N-terminal tandem pair of PDZ domains); the interaction possibly being prevented by the association between NOS1 and CAPON. Forms a ternary complex with CAPON and RASD1. Forms a ternary complex with CAPON and SYN1. Interacts with ZDHHC23. Interacts with NOSIP; which may impair its synaptic location. Interacts with HTR4. Interacts with SLC6A4. Interacts with VAC14. Forms a complex with ASL, ASS1 and SLC7A1; the complex regulates cell-autonomous L-arginine synthesis and citrulline recycling while channeling extracellular L-arginine to nitric oxide synthesis pathway. Interacts with DMD; localizes NOS1 to sarcolemma in muscle cells. Interacts with DYNLL1; inhibits the nitric oxide synthase activity. Heme b is required as a cofactor. FAD serves as cofactor. It depends on FMN as a cofactor. The cofactor is (6R)-L-erythro-5,6,7,8-tetrahydrobiopterin. Post-translationally, ubiquitinated; mediated by STUB1/CHIP in the presence of Hsp70 and Hsp40 (in vitro). In terms of tissue distribution, isoform N-NOS-1 is expressed in brain and colorectum. Found in the Auerbach's plexus of the enteric nervous system. Isoform PNNOS is expressed in the penis, urethra, prostate, and skeletal muscle, and coexists with the cerebellar nnos in the pelvic plexus, bladder and liver, and is detectable in the cerebellum.

It is found in the cell membrane. The protein localises to the sarcolemma. It localises to the cell projection. Its subcellular location is the dendritic spine. It carries out the reaction 2 L-arginine + 3 NADPH + 4 O2 + H(+) = 2 L-citrulline + 2 nitric oxide + 3 NADP(+) + 4 H2O. Its activity is regulated as follows. Stimulated by calcium/calmodulin. Inhibited by DYNLL1 that prevents the dimerization of the protein. Inhibited by NOSIP. Produces nitric oxide (NO) which is a messenger molecule with diverse functions throughout the body. In the brain and peripheral nervous system, NO displays many properties of a neurotransmitter. Inhibitory transmitter for non-adrenergic and non-cholinergic nerves in the colorectum. Probably has nitrosylase activity and mediates cysteine S-nitrosylation of cytoplasmic target proteins such SRR. Inhibitory transmitter for non-adrenergic and non-cholinergic nerves in the colorectum. This is Nitric oxide synthase 1 from Rattus norvegicus (Rat).